Reading from the N-terminus, the 262-residue chain is Nickel import ATP-binding protein NikD (262 aa).

The ABC transporter domain maps to 6 to 249 (LAIEGLTATT…PGHEVTRMLV (244 aa)). 42 to 49 (GASGSGKS) provides a ligand contact to ATP.

The protein belongs to the ABC transporter superfamily. Nickel importer (TC 3.A.1.5.3) family. The complex is composed of two ATP-binding proteins (NikD and NikE), two transmembrane proteins (NikB and NikC) and a solute-binding protein (NikA).

The protein localises to the cell inner membrane. It catalyses the reaction Ni(2+)(out) + ATP + H2O = Ni(2+)(in) + ADP + phosphate + H(+). Functionally, part of the ABC transporter complex NikABCDE involved in nickel import. Responsible for energy coupling to the transport system. The protein is Nickel import ATP-binding protein NikD of Brucella suis biovar 1 (strain 1330).